The primary structure comprises 223 residues: Small ribosomal subunit protein uS3 (223 aa).

The region spanning 39–108 (IRNFVKKNSY…NILINIVEVK (70 aa)) is the KH type-2 domain.

Belongs to the universal ribosomal protein uS3 family. Part of the 30S ribosomal subunit. Forms a tight complex with proteins S10 and S14.

Its function is as follows. Binds the lower part of the 30S subunit head. Binds mRNA in the 70S ribosome, positioning it for translation. The protein is Small ribosomal subunit protein uS3 of Clostridium botulinum (strain Kyoto / Type A2).